A 165-amino-acid polypeptide reads, in one-letter code: Transcriptional repressor NrdR (165 aa).

A zinc finger spans residues 3–34 (CPFCSANDTKVIDSRLVSDGHQVRRRRECLAC). One can recognise an ATP-cone domain in the interval 49–139 (PRIIKRDGSR…VYLSFEDISE (91 aa)).

The protein belongs to the NrdR family. Zn(2+) serves as cofactor.

In terms of biological role, negatively regulates transcription of bacterial ribonucleotide reductase nrd genes and operons by binding to NrdR-boxes. The protein is Transcriptional repressor NrdR of Colwellia psychrerythraea (strain 34H / ATCC BAA-681) (Vibrio psychroerythus).